We begin with the raw amino-acid sequence, 333 residues long: Homeobox protein Nkx-3.2 (333 aa).

Disordered regions lie at residues 74–121 (PART…RARV) and 137–212 (DLEE…SRAA). The segment covering 137 to 148 (DLEEEAPVRSDS) has biased composition (basic and acidic residues). Over residues 179 to 191 (GAAGSGASGGQAG) the composition is skewed to gly residues. Residues 206-265 (KKRSRAAFSHAQVFELERRFNHQRYLSGPERADLAASLKLTETQVKIWFQNRRYKTKRRQ) constitute a DNA-binding region (homeobox).

Belongs to the NK-3 homeobox family. In terms of tissue distribution, expressed widely in mesoderm at the gastroduodenal junction (at protein level). Expressed in visceral mesoderm and embryonic skeleton. Expression is restricted to immature proliferative chondrocytes during endochondral ossification.

Its subcellular location is the nucleus. Functionally, transcriptional repressor that acts as a negative regulator of chondrocyte maturation. PLays a role in distal stomach development; required for proper antral-pyloric morphogenesis and development of antral-type epithelium. In concert with GSC, defines the structural components of the middle ear; required for tympanic ring and gonium development and in the regulation of the width of the malleus. The polypeptide is Homeobox protein Nkx-3.2 (Nkx3-2) (Mus musculus (Mouse)).